Here is a 246-residue protein sequence, read N- to C-terminus: 4-hydroxy-tetrahydrodipicolinate reductase (246 aa).

NAD(+) contacts are provided by residues 8-13 (GAKGRM), 74-76 (GTT), and 101-104 (APNF). His131 functions as the Proton donor/acceptor in the catalytic mechanism. His132 is a (S)-2,3,4,5-tetrahydrodipicolinate binding site. Residue Lys135 is the Proton donor of the active site. 141–142 (GT) is a binding site for (S)-2,3,4,5-tetrahydrodipicolinate.

This sequence belongs to the DapB family.

The protein localises to the cytoplasm. It carries out the reaction (S)-2,3,4,5-tetrahydrodipicolinate + NAD(+) + H2O = (2S,4S)-4-hydroxy-2,3,4,5-tetrahydrodipicolinate + NADH + H(+). The catalysed reaction is (S)-2,3,4,5-tetrahydrodipicolinate + NADP(+) + H2O = (2S,4S)-4-hydroxy-2,3,4,5-tetrahydrodipicolinate + NADPH + H(+). The protein operates within amino-acid biosynthesis; L-lysine biosynthesis via DAP pathway; (S)-tetrahydrodipicolinate from L-aspartate: step 4/4. Its function is as follows. Catalyzes the conversion of 4-hydroxy-tetrahydrodipicolinate (HTPA) to tetrahydrodipicolinate. This chain is 4-hydroxy-tetrahydrodipicolinate reductase, found in Cutibacterium acnes (strain DSM 16379 / KPA171202) (Propionibacterium acnes).